The sequence spans 156 residues: ATP synthase subunit b (156 aa).

The helical transmembrane segment at 12–32 threads the bilayer; it reads VAFFIFVLFCMKYVWPPVIAA.

Belongs to the ATPase B chain family. F-type ATPases have 2 components, F(1) - the catalytic core - and F(0) - the membrane proton channel. F(1) has five subunits: alpha(3), beta(3), gamma(1), delta(1), epsilon(1). F(0) has three main subunits: a(1), b(2) and c(10-14). The alpha and beta chains form an alternating ring which encloses part of the gamma chain. F(1) is attached to F(0) by a central stalk formed by the gamma and epsilon chains, while a peripheral stalk is formed by the delta and b chains.

Its subcellular location is the cell inner membrane. F(1)F(0) ATP synthase produces ATP from ADP in the presence of a proton or sodium gradient. F-type ATPases consist of two structural domains, F(1) containing the extramembraneous catalytic core and F(0) containing the membrane proton channel, linked together by a central stalk and a peripheral stalk. During catalysis, ATP synthesis in the catalytic domain of F(1) is coupled via a rotary mechanism of the central stalk subunits to proton translocation. Functionally, component of the F(0) channel, it forms part of the peripheral stalk, linking F(1) to F(0). The chain is ATP synthase subunit b from Pseudomonas syringae pv. tomato (strain ATCC BAA-871 / DC3000).